The sequence spans 207 residues: Ras-related protein Rab-7a (207 aa).

An N-acetylthreonine modification is found at Thr-2. Residues Ser-17, Gly-18, Val-19, Gly-20, Lys-21, Thr-22, Ser-23, Ser-34, Asn-35, Tyr-37, and Thr-40 each coordinate GTP. Thr-22 is a Mg(2+) binding site. The Switch 1 signature appears at 28 to 41 (YVNKKFSNQYKATI). The Mg(2+) site is built by Thr-40 and Asp-63. Gly-66 serves as a coordination point for GTP. The short motif at 67–82 (QERFQSLGVAFYRGAD) is the Switch 2 element. Ser-72 carries the post-translational modification Phosphoserine. Residues Asn-125, Lys-126, Asp-128, Ala-156, and Lys-157 each coordinate GTP. Residues Lys-191 and Lys-194 each participate in a glycyl lysine isopeptide (Lys-Gly) (interchain with G-Cter in ubiquitin) cross-link. Residues Cys-205 and Cys-207 are each lipidated (S-geranylgeranyl cysteine). Position 207 is a cysteine methyl ester (Cys-207).

It belongs to the small GTPase superfamily. Rab family. In terms of assembly, interacts with NTRK1/TRKA. Interacts with RILP. Interacts with PSMA7. Interacts with RNF115. Interacts with FYCO1. Interacts with the PIK3C3/VPS34-PIK3R4 complex. The GTP-bound form interacts with OSBPL1A. The GTP-bound form interacts with RAC1. Interacts with CLN3. Interacts with CHM, the substrate-binding subunit of the Rab geranylgeranyltransferase complex. Interacts with C9orf72. Does not interact with HPS4 and the BLOC-3 complex (heterodimer of HPS1 and HPS4). Interacts with CLN5. Interacts with PLEKHM1 (via N- and C-terminus). Interacts with PRPH; the interaction is direct. Interacts with VPS13A. The GDP-bound form interacts with RIMOC1. Interacts with the MON1A-CCZ1B complex and this interaction is enhanced in the presence of RIMOC1. Interacts with VPS39 and VPS41. Forms a ternary complex with LAMP2 and RUFY4; the interaction with LAMP2 is mediated by RUFY4 (via RUN and coiled coil domains). Mg(2+) serves as cofactor. Post-translationally, deubiquitination at Lys-191 and Lys-194 by USP32. Phosphorylated at Ser-72 by LRRK1; phosphorylation is dependent on protein kinase C (PKC) activation of LRRK1. In terms of processing, prenylated. Prenylation is required for association with cellular membranes.

The protein localises to the cytoplasmic vesicle. The protein resides in the phagosome membrane. Its subcellular location is the late endosome membrane. It localises to the lysosome membrane. It is found in the melanosome membrane. The protein localises to the autophagosome membrane. The protein resides in the lipid droplet. Its subcellular location is the endosome membrane. It localises to the mitochondrion membrane. The enzyme catalyses GTP + H2O = GDP + phosphate + H(+). With respect to regulation, regulated by guanine nucleotide exchange factors (GEFs) which promote the exchange of bound GDP for free GTP. Regulated by GTPase activating proteins (GAPs) which increase the GTP hydrolysis activity. Inhibited by GDP dissociation inhibitors (GDIs). In terms of biological role, the small GTPases Rab are key regulators of intracellular membrane trafficking, from the formation of transport vesicles to their fusion with membranes. Rabs cycle between an inactive GDP-bound form and an active GTP-bound form that is able to recruit to membranes different sets of downstream effectors directly responsible for vesicle formation, movement, tethering and fusion. In its active state, RAB7A binds to a variety of effector proteins playing a key role in the regulation of endo-lysosomal trafficking. Governs early-to-late endosomal maturation, microtubule minus-end as well as plus-end directed endosomal migration and positioning, and endosome-lysosome transport through different protein-protein interaction cascades. Also plays a central role in growth-factor-mediated cell signaling, nutrient-transporter-mediated nutrient uptake, neurotrophin transport in the axons of neurons and lipid metabolism. Also involved in regulation of some specialized endosomal membrane trafficking, such as maturation of melanosomes, pathogen-induced phagosomes (or vacuoles) and autophagosomes. Plays a role in the maturation and acidification of phagosomes that engulf pathogens, such as S.aureus and Mycobacteria. Plays a role in the fusion of phagosomes with lysosomes. In concert with RAC1, plays a role in regulating the formation of RBs (ruffled borders) in osteoclasts. Controls the endosomal trafficking and neurite outgrowth signaling of NTRK1/TRKA. Regulates the endocytic trafficking of the EGF-EGFR complex by regulating its lysosomal degradation. Involved in the ADRB2-stimulated lipolysis through lipophagy, a cytosolic lipase-independent autophagic pathway. Required for the exosomal release of SDCBP, CD63 and syndecan. Required for vesicular trafficking and cell surface expression of ACE2. May play a role in PRPH neuronal intermediate filament assembly. This Pongo abelii (Sumatran orangutan) protein is Ras-related protein Rab-7a (RAB7A).